We begin with the raw amino-acid sequence, 302 residues long: 4-hydroxy-tetrahydrodipicolinate synthase (302 aa).

Thr-57 is a pyruvate binding site. Tyr-145 acts as the Proton donor/acceptor in catalysis. Lys-173 serves as the catalytic Schiff-base intermediate with substrate. Residue Ile-213 coordinates pyruvate.

The protein belongs to the DapA family. In terms of assembly, homotetramer; dimer of dimers.

The protein resides in the cytoplasm. It catalyses the reaction L-aspartate 4-semialdehyde + pyruvate = (2S,4S)-4-hydroxy-2,3,4,5-tetrahydrodipicolinate + H2O + H(+). It functions in the pathway amino-acid biosynthesis; L-lysine biosynthesis via DAP pathway; (S)-tetrahydrodipicolinate from L-aspartate: step 3/4. Functionally, catalyzes the condensation of (S)-aspartate-beta-semialdehyde [(S)-ASA] and pyruvate to 4-hydroxy-tetrahydrodipicolinate (HTPA). The polypeptide is 4-hydroxy-tetrahydrodipicolinate synthase (Corynebacterium aurimucosum (strain ATCC 700975 / DSM 44827 / CIP 107346 / CN-1) (Corynebacterium nigricans)).